Here is a 134-residue protein sequence, read N- to C-terminus: Transcription antitermination protein NusB (134 aa).

Belongs to the NusB family.

Its function is as follows. Involved in transcription antitermination. Required for transcription of ribosomal RNA (rRNA) genes. Binds specifically to the boxA antiterminator sequence of the ribosomal RNA (rrn) operons. This Syntrophomonas wolfei subsp. wolfei (strain DSM 2245B / Goettingen) protein is Transcription antitermination protein NusB.